The primary structure comprises 114 residues: Large ribosomal subunit protein bL17 (114 aa).

Belongs to the bacterial ribosomal protein bL17 family. In terms of assembly, part of the 50S ribosomal subunit. Contacts protein L32.

In Halothermothrix orenii (strain H 168 / OCM 544 / DSM 9562), this protein is Large ribosomal subunit protein bL17.